Reading from the N-terminus, the 148-residue chain is Lipoprotein signal peptidase (148 aa).

2 consecutive transmembrane segments (helical) span residues 57 to 77 (QWIF…YLNT) and 80 to 100 (VHIF…GNLI). Catalysis depends on residues Asp110 and Asp126. A helical transmembrane segment spans residues 124-144 (IADVFVVVGTVFLCIYVLFFE).

Belongs to the peptidase A8 family.

It localises to the cell membrane. The enzyme catalyses Release of signal peptides from bacterial membrane prolipoproteins. Hydrolyzes -Xaa-Yaa-Zaa-|-(S,diacylglyceryl)Cys-, in which Xaa is hydrophobic (preferably Leu), and Yaa (Ala or Ser) and Zaa (Gly or Ala) have small, neutral side chains.. Its pathway is protein modification; lipoprotein biosynthesis (signal peptide cleavage). This protein specifically catalyzes the removal of signal peptides from prolipoproteins. The chain is Lipoprotein signal peptidase from Clostridioides difficile (strain 630) (Peptoclostridium difficile).